Consider the following 268-residue polypeptide: Indole-3-glycerol phosphate synthase (268 aa).

The protein belongs to the TrpC family.

It carries out the reaction 1-(2-carboxyphenylamino)-1-deoxy-D-ribulose 5-phosphate + H(+) = (1S,2R)-1-C-(indol-3-yl)glycerol 3-phosphate + CO2 + H2O. The protein operates within amino-acid biosynthesis; L-tryptophan biosynthesis; L-tryptophan from chorismate: step 4/5. The sequence is that of Indole-3-glycerol phosphate synthase from Lachnospira eligens (strain ATCC 27750 / DSM 3376 / VPI C15-48 / C15-B4) (Eubacterium eligens).